The following is a 517-amino-acid chain: Putative ribose/galactose/methyl galactoside import ATP-binding protein 1 (517 aa).

ABC transporter domains are found at residues 23-258 and 269-515; these read LQLQ…VGRP and TPTD…SGRS. 55–62 contacts ATP; it reads GENGAGKS.

The protein belongs to the ABC transporter superfamily. Carbohydrate importer 2 (CUT2) (TC 3.A.1.2) family.

The protein localises to the cell inner membrane. The catalysed reaction is D-ribose(out) + ATP + H2O = D-ribose(in) + ADP + phosphate + H(+). The enzyme catalyses D-galactose(out) + ATP + H2O = D-galactose(in) + ADP + phosphate + H(+). Part of an ABC transporter complex involved in carbohydrate import. Could be involved in ribose, galactose and/or methyl galactoside import. Responsible for energy coupling to the transport system. The sequence is that of Putative ribose/galactose/methyl galactoside import ATP-binding protein 1 from Burkholderia ambifaria (strain ATCC BAA-244 / DSM 16087 / CCUG 44356 / LMG 19182 / AMMD) (Burkholderia cepacia (strain AMMD)).